The chain runs to 227 residues: Cytochrome c oxidase subunit 2 (227 aa).

Residues 1 to 14 (MAYPFQLGLQDASS) are Mitochondrial intermembrane-facing. Residues 15–45 (PIMEELMNFHDHTLMIVFLISSLVLYLMALM) form a helical membrane-spanning segment. Topologically, residues 46 to 59 (LSTKLIHTSTMDAQ) are mitochondrial matrix. Residues 60–87 (EVETIWTILPAIILIMIALPSLRILYMM) form a helical membrane-spanning segment. The Mitochondrial intermembrane segment spans residues 88–227 (DEINNPILTV…LFENWSMSMT (140 aa)). Cu cation contacts are provided by His-161, Cys-196, Glu-198, Cys-200, His-204, and Met-207. Glu-198 lines the Mg(2+) pocket.

This sequence belongs to the cytochrome c oxidase subunit 2 family. In terms of assembly, component of the cytochrome c oxidase (complex IV, CIV), a multisubunit enzyme composed of 14 subunits. The complex is composed of a catalytic core of 3 subunits MT-CO1, MT-CO2 and MT-CO3, encoded in the mitochondrial DNA, and 11 supernumerary subunits COX4I, COX5A, COX5B, COX6A, COX6B, COX6C, COX7A, COX7B, COX7C, COX8 and NDUFA4, which are encoded in the nuclear genome. The complex exists as a monomer or a dimer and forms supercomplexes (SCs) in the inner mitochondrial membrane with NADH-ubiquinone oxidoreductase (complex I, CI) and ubiquinol-cytochrome c oxidoreductase (cytochrome b-c1 complex, complex III, CIII), resulting in different assemblies (supercomplex SCI(1)III(2)IV(1) and megacomplex MCI(2)III(2)IV(2)). Found in a complex with TMEM177, COA6, COX18, COX20, SCO1 and SCO2. Interacts with TMEM177 in a COX20-dependent manner. Interacts with COX20. Interacts with COX16. Cu cation serves as cofactor.

It is found in the mitochondrion inner membrane. The catalysed reaction is 4 Fe(II)-[cytochrome c] + O2 + 8 H(+)(in) = 4 Fe(III)-[cytochrome c] + 2 H2O + 4 H(+)(out). In terms of biological role, component of the cytochrome c oxidase, the last enzyme in the mitochondrial electron transport chain which drives oxidative phosphorylation. The respiratory chain contains 3 multisubunit complexes succinate dehydrogenase (complex II, CII), ubiquinol-cytochrome c oxidoreductase (cytochrome b-c1 complex, complex III, CIII) and cytochrome c oxidase (complex IV, CIV), that cooperate to transfer electrons derived from NADH and succinate to molecular oxygen, creating an electrochemical gradient over the inner membrane that drives transmembrane transport and the ATP synthase. Cytochrome c oxidase is the component of the respiratory chain that catalyzes the reduction of oxygen to water. Electrons originating from reduced cytochrome c in the intermembrane space (IMS) are transferred via the dinuclear copper A center (CU(A)) of subunit 2 and heme A of subunit 1 to the active site in subunit 1, a binuclear center (BNC) formed by heme A3 and copper B (CU(B)). The BNC reduces molecular oxygen to 2 water molecules using 4 electrons from cytochrome c in the IMS and 4 protons from the mitochondrial matrix. This Gerbillus gerbillus (Lesser Egyptian gerbil) protein is Cytochrome c oxidase subunit 2 (MT-CO2).